We begin with the raw amino-acid sequence, 86 residues long: Large ribosomal subunit protein uL23c (86 aa).

The protein belongs to the universal ribosomal protein uL23 family. Part of the 50S ribosomal subunit.

The protein resides in the plastid. The protein localises to the chloroplast. Functionally, binds to 23S rRNA. The chain is Large ribosomal subunit protein uL23c (rpl23) from Chlorella vulgaris (Green alga).